The sequence spans 261 residues: Transcription repressor OFP15 (261 aa).

A disordered region spans residues 1–28; it reads MKLPFLNKNHSTSSYSSNSSSSSWPWPS. The span at 11-28 shows a compositional bias: low complexity; the sequence is STSSYSSNSSSSSWPWPS. Residues 112 to 172 enclose the OVATE domain; sequence FSLESDDPYS…FAAFVDLLMN (61 aa).

In terms of assembly, interacts with BLH1 and BLH3. In terms of tissue distribution, expressed in roots, cauline leaves, shoots, flower buds and siliques.

Its subcellular location is the nucleus. Transcriptional repressor that regulates multiple aspects of plant growth and development through the regulation of BEL1-LIKE (BLH) and KNOX TALE (KNAT) homeodomain transcription factors. The polypeptide is Transcription repressor OFP15 (OFP15) (Arabidopsis thaliana (Mouse-ear cress)).